Here is a 120-residue protein sequence, read N- to C-terminus: NAD(P)H-quinone oxidoreductase subunit 3, chloroplastic (120 aa).

3 helical membrane passes run 9–29 (IFWAFLMISSVIPILAFLISG), 64–84 (MFALVFVVFDVETVFLYPWAM), and 88–108 (VLGVSVFIEALIFVLIPIVGS).

This sequence belongs to the complex I subunit 3 family. In terms of assembly, NDH is composed of at least 16 different subunits, 5 of which are encoded in the nucleus.

It is found in the plastid. The protein resides in the chloroplast thylakoid membrane. It carries out the reaction a plastoquinone + NADH + (n+1) H(+)(in) = a plastoquinol + NAD(+) + n H(+)(out). It catalyses the reaction a plastoquinone + NADPH + (n+1) H(+)(in) = a plastoquinol + NADP(+) + n H(+)(out). Its function is as follows. NDH shuttles electrons from NAD(P)H:plastoquinone, via FMN and iron-sulfur (Fe-S) centers, to quinones in the photosynthetic chain and possibly in a chloroplast respiratory chain. The immediate electron acceptor for the enzyme in this species is believed to be plastoquinone. Couples the redox reaction to proton translocation, and thus conserves the redox energy in a proton gradient. This is NAD(P)H-quinone oxidoreductase subunit 3, chloroplastic from Amborella trichopoda.